Here is a 1579-residue protein sequence, read N- to C-terminus: MAP kinase kinase kinase SSK2 (1579 aa).

Residues 1-70 (MSHSDYFNYK…HSTQYFRSPN (70 aa)) are disordered. A compositionally biased stretch (low complexity) spans 21-44 (SSKMRQSSSSSSSRLRSESLGRNS). A compositionally biased stretch (polar residues) spans 45 to 67 (NTTQARVASSPISPGLHSTQYFR). 4 positions are modified to phosphoserine: serine 57, serine 62, serine 78, and serine 118. Disordered stretches follow at residues 97-155 (FFHQ…ESEI) and 190-243 (SIMS…GSTT). Over residues 104-118 (SGSSSSSARSSRRPS) the composition is skewed to low complexity. A compositionally biased stretch (polar residues) spans 127–139 (NPQQSLPKLSTQP). Basic and acidic residues predominate over residues 144–155 (KKVEASKTESEI). Serine 290 carries the phosphoserine modification. In terms of domain architecture, Protein kinase spans 1266–1558 (WQKRNFIGGG…AVELLMDPWI (293 aa)). ATP contacts are provided by residues 1272 to 1280 (IGGGTFGRV) and lysine 1295. Aspartate 1390 acts as the Proton acceptor in catalysis. Residue serine 1424 is modified to Phosphoserine.

This sequence belongs to the protein kinase superfamily. STE Ser/Thr protein kinase family. MAP kinase kinase kinase subfamily. Interacts with by SSK1.

The catalysed reaction is L-seryl-[protein] + ATP = O-phospho-L-seryl-[protein] + ADP + H(+). The enzyme catalyses L-threonyl-[protein] + ATP = O-phospho-L-threonyl-[protein] + ADP + H(+). Kinase involved in a signal transduction pathway that is activated by changes in the osmolarity of the extracellular environment. Activates the PBS2 MAP kinase kinase by phosphorylation. The polypeptide is MAP kinase kinase kinase SSK2 (SSK2) (Saccharomyces cerevisiae (strain ATCC 204508 / S288c) (Baker's yeast)).